The sequence spans 242 residues: Transcriptional regulatory protein btr (242 aa).

The HTH crp-type domain maps to 158–231 (MRSEQRLAAF…QREVRLIDLP (74 aa)). The segment at residues 191-210 (REEIGNYLGLTLETVSRLFS) is a DNA-binding region (H-T-H motif).

In terms of biological role, may regulate gene expression in response to changes in oxygen levels or to changes in the redox potential of the bacterial environment. The protein is Transcriptional regulatory protein btr (btr) of Bordetella pertussis (strain Tohama I / ATCC BAA-589 / NCTC 13251).